A 466-amino-acid polypeptide reads, in one-letter code: MARFFKPQKRKITDTKHKEIVINRLDHLGAGIGHLNNKSIFVDGLLPGEKALVQITDDKKQYARAKVIKRLIDSPARIKPHCPIYDQCGGCNLQHLSHQGQVLAKQQALSDLMVKFAGDQQVAVDKQRAGDQQRALFEQVTPIIAAEHHYRRCARFSVLLGKDGQLQFGLRKKQSKDIVNVKQCPVLAESLNELLPPLRSLLSTLKGQRHLGHIELIEADNGRVVLIRHLKPFSDKDMTLILNFAQEQNVILFLAPTSDDIELIHGETPYYRLDDLTLHFSPKDFIQVNRDVNKKMVEQATDWLDLQPSDRVLDLFCGLGNFSLPLAKHAKAVVGVEGIDEMVHRATENAMCNKQNNATFYQANLDEDVTKLAWAREPFNKILLDPARAGAAGVMEHVVKLKPERVVYVSCNPATLARDSQVLLKKGYQLERLGMLDMFPQTGHLESMALFVKAKAVKKKRVVTKL.

The TRAM domain maps to 11 to 69 (KITDTKHKEIVINRLDHLGAGIGHLNNKSIFVDGLLPGEKALVQITDDKKQYARAKVIK). Cysteine 82, cysteine 88, cysteine 91, and cysteine 184 together coordinate [4Fe-4S] cluster. Glutamine 287, phenylalanine 316, asparagine 321, glutamate 337, asparagine 364, and aspartate 385 together coordinate S-adenosyl-L-methionine. Catalysis depends on cysteine 411, which acts as the Nucleophile.

Belongs to the class I-like SAM-binding methyltransferase superfamily. RNA M5U methyltransferase family. RlmD subfamily.

The catalysed reaction is uridine(1939) in 23S rRNA + S-adenosyl-L-methionine = 5-methyluridine(1939) in 23S rRNA + S-adenosyl-L-homocysteine + H(+). Catalyzes the formation of 5-methyl-uridine at position 1939 (m5U1939) in 23S rRNA. The protein is 23S rRNA (uracil(1939)-C(5))-methyltransferase RlmD of Photobacterium profundum (strain SS9).